The following is a 116-amino-acid chain: Large ribosomal subunit protein bL17 (116 aa).

It belongs to the bacterial ribosomal protein bL17 family. In terms of assembly, part of the 50S ribosomal subunit. Contacts protein L32.

This chain is Large ribosomal subunit protein bL17, found in Chloroflexus aurantiacus (strain ATCC 29366 / DSM 635 / J-10-fl).